We begin with the raw amino-acid sequence, 100 residues long: Small ribosomal subunit protein uS14c (100 aa).

The protein belongs to the universal ribosomal protein uS14 family. In terms of assembly, part of the 30S ribosomal subunit.

Its subcellular location is the plastid. The protein localises to the chloroplast. In terms of biological role, binds 16S rRNA, required for the assembly of 30S particles. This Psilotum nudum (Whisk fern) protein is Small ribosomal subunit protein uS14c.